The sequence spans 113 residues: Ribonuclease P protein component (113 aa).

It belongs to the RnpA family. In terms of assembly, consists of a catalytic RNA component (M1 or rnpB) and a protein subunit.

The catalysed reaction is Endonucleolytic cleavage of RNA, removing 5'-extranucleotides from tRNA precursor.. RNaseP catalyzes the removal of the 5'-leader sequence from pre-tRNA to produce the mature 5'-terminus. It can also cleave other RNA substrates such as 4.5S RNA. The protein component plays an auxiliary but essential role in vivo by binding to the 5'-leader sequence and broadening the substrate specificity of the ribozyme. The protein is Ribonuclease P protein component of Ligilactobacillus salivarius (strain UCC118) (Lactobacillus salivarius).